The following is a 150-amino-acid chain: Large ribosomal subunit protein bL9 (150 aa).

Belongs to the bacterial ribosomal protein bL9 family.

Binds to the 23S rRNA. The chain is Large ribosomal subunit protein bL9 from Yersinia enterocolitica serotype O:8 / biotype 1B (strain NCTC 13174 / 8081).